Here is a 107-residue protein sequence, read N- to C-terminus: Small ribosomal subunit protein uS17 (107 aa).

This sequence belongs to the universal ribosomal protein uS17 family. Part of the 30S ribosomal subunit.

Functionally, one of the primary rRNA binding proteins, it binds specifically to the 5'-end of 16S ribosomal RNA. This Thermotoga sp. (strain RQ2) protein is Small ribosomal subunit protein uS17.